The sequence spans 202 residues: dTTP/UTP pyrophosphatase (202 aa).

D74 serves as the catalytic Proton acceptor.

This sequence belongs to the Maf family. YhdE subfamily. Requires a divalent metal cation as cofactor.

It is found in the cytoplasm. The enzyme catalyses dTTP + H2O = dTMP + diphosphate + H(+). It catalyses the reaction UTP + H2O = UMP + diphosphate + H(+). Nucleoside triphosphate pyrophosphatase that hydrolyzes dTTP and UTP. May have a dual role in cell division arrest and in preventing the incorporation of modified nucleotides into cellular nucleic acids. The chain is dTTP/UTP pyrophosphatase from Methylococcus capsulatus (strain ATCC 33009 / NCIMB 11132 / Bath).